The sequence spans 35 residues: Photosystem II reaction center protein M (35 aa).

Residues isoleucine 5–leucine 25 form a helical membrane-spanning segment.

It belongs to the PsbM family. In terms of assembly, PSII is composed of 1 copy each of membrane proteins PsbA, PsbB, PsbC, PsbD, PsbE, PsbF, PsbH, PsbI, PsbJ, PsbK, PsbL, PsbM, PsbT, PsbX, PsbY, PsbZ, Psb30/Ycf12, at least 3 peripheral proteins of the oxygen-evolving complex and a large number of cofactors. It forms dimeric complexes.

It is found in the plastid. The protein resides in the chloroplast thylakoid membrane. One of the components of the core complex of photosystem II (PSII). PSII is a light-driven water:plastoquinone oxidoreductase that uses light energy to abstract electrons from H(2)O, generating O(2) and a proton gradient subsequently used for ATP formation. It consists of a core antenna complex that captures photons, and an electron transfer chain that converts photonic excitation into a charge separation. This subunit is found at the monomer-monomer interface. This chain is Photosystem II reaction center protein M, found in Tetradesmus obliquus (Green alga).